The sequence spans 987 residues: ATP-dependent 6-phosphofructokinase subunit alpha (987 aa).

The tract at residues 1 to 580 is N-terminal catalytic PFK domain 1; that stretch reads MQSQDSCYGV…LYENFLSTTV (580 aa). Serine 3 is subject to Phosphoserine. Lysine 89 participates in a covalent cross-link: Glycyl lysine isopeptide (Lys-Gly) (interchain with G-Cter in ubiquitin). 5 positions are modified to phosphoserine: serine 166, serine 179, serine 185, serine 189, and serine 192. Position 215 (glycine 215) interacts with ATP. Serine 217 carries the phosphoserine modification. Residues 278-279 and 308-311 each bind ATP; these read RS and GDGS. Residue aspartate 309 coordinates Mg(2+). Beta-D-fructose 6-phosphate-binding positions include 354–356, arginine 391, and 398–400; these read SID and MGR. The Proton acceptor role is filled by aspartate 356. Phosphothreonine is present on threonine 450. Residues glutamate 455, lysine 482, and 488–491 contribute to the beta-D-fructose 6-phosphate site; that span reads HVQR. Residues 581–594 form an interdomain linker region; that stretch reads KDDGSELLPVSDRL. The C-terminal regulatory PFK domain 2 stretch occupies residues 595–987; that stretch reads NIGIVHVGAP…EVAALAAENK (393 aa). Lysine 625 is covalently cross-linked (Glycyl lysine isopeptide (Lys-Gly) (interchain with G-Cter in ubiquitin)). Residues arginine 665, 722-726, arginine 760, 767-769, glutamate 827, arginine 853, 859-862, and arginine 952 contribute to the beta-D-fructose 2,6-bisphosphate site; these read TVSNN, QGG, and HVQQ.

Belongs to the phosphofructokinase type A (PFKA) family. ATP-dependent PFK group I subfamily. Eukaryotic two domain clade 'E' sub-subfamily. As to quaternary structure, heterooctamer of 4 alpha and 4 beta chains. Mg(2+) is required as a cofactor.

The protein resides in the cytoplasm. It is found in the mitochondrion outer membrane. The enzyme catalyses beta-D-fructose 6-phosphate + ATP = beta-D-fructose 1,6-bisphosphate + ADP + H(+). Its pathway is carbohydrate degradation; glycolysis; D-glyceraldehyde 3-phosphate and glycerone phosphate from D-glucose: step 3/4. With respect to regulation, allosterically activated by ADP, AMP, or fructose 2,6-bisphosphate, and allosterically inhibited by ATP or citrate. Catalyzes the phosphorylation of D-fructose 6-phosphate to fructose 1,6-bisphosphate by ATP, the first committing step of glycolysis. In Saccharomyces cerevisiae (strain ATCC 204508 / S288c) (Baker's yeast), this protein is ATP-dependent 6-phosphofructokinase subunit alpha (PFK1).